Reading from the N-terminus, the 309-residue chain is L-aminoadipate-semialdehyde dehydrogenase-phosphopantetheinyl transferase (309 aa).

Residues Arg-47, 86–91 (RTAKGK), and 108–111 (NISH) each bind CoA. Mg(2+)-binding residues include Asp-129 and Glu-181. 181-185 (ESFIK) contributes to the CoA binding site. Position 258 is a phosphoserine (Ser-258).

The protein belongs to the P-Pant transferase superfamily. AcpS family. In terms of assembly, monomer. Mg(2+) is required as a cofactor.

It is found in the cytoplasm. The protein localises to the cytosol. It catalyses the reaction apo-[ACP] + CoA = holo-[ACP] + adenosine 3',5'-bisphosphate + H(+). The enzyme catalyses apo-[ACP] + acetyl-CoA = acetyl-[ACP] + adenosine 3',5'-bisphosphate + H(+). Its function is as follows. Catalyzes the post-translational modification of target proteins by phosphopantetheine. Can transfer the 4'-phosphopantetheine moiety from coenzyme A, regardless of whether the CoA is presented in the free thiol form or as an acetyl thioester, to a serine residue of a broad range of acceptors including the acyl carrier domain of FASN. This Pongo abelii (Sumatran orangutan) protein is L-aminoadipate-semialdehyde dehydrogenase-phosphopantetheinyl transferase (AASDHPPT).